Reading from the N-terminus, the 158-residue chain is NAD(P)H-quinone oxidoreductase subunit J, chloroplastic (158 aa).

This sequence belongs to the complex I 30 kDa subunit family. In terms of assembly, NDH is composed of at least 16 different subunits, 5 of which are encoded in the nucleus.

The protein resides in the plastid. The protein localises to the chloroplast thylakoid membrane. It carries out the reaction a plastoquinone + NADH + (n+1) H(+)(in) = a plastoquinol + NAD(+) + n H(+)(out). The enzyme catalyses a plastoquinone + NADPH + (n+1) H(+)(in) = a plastoquinol + NADP(+) + n H(+)(out). NDH shuttles electrons from NAD(P)H:plastoquinone, via FMN and iron-sulfur (Fe-S) centers, to quinones in the photosynthetic chain and possibly in a chloroplast respiratory chain. The immediate electron acceptor for the enzyme in this species is believed to be plastoquinone. Couples the redox reaction to proton translocation, and thus conserves the redox energy in a proton gradient. In Platanus occidentalis (Sycamore), this protein is NAD(P)H-quinone oxidoreductase subunit J, chloroplastic.